The sequence spans 91 residues: MDIKLINIGFGNIVSASRIVAIVSPESAPIKRIIQEARDRGMLIDATYGRRTRAVIITDSDHVILSAVQPETVAHRLSAKESVHHGDEATE.

It belongs to the RemA family.

The polypeptide is Putative regulatory protein Helmi_20580 (Heliobacterium modesticaldum (strain ATCC 51547 / Ice1)).